The following is a 183-amino-acid chain: Ribosome-recycling factor (183 aa).

It belongs to the RRF family.

The protein localises to the cytoplasm. Its function is as follows. Responsible for the release of ribosomes from messenger RNA at the termination of protein biosynthesis. May increase the efficiency of translation by recycling ribosomes from one round of translation to another. The chain is Ribosome-recycling factor from Bifidobacterium longum (strain DJO10A).